Reading from the N-terminus, the 326-residue chain is Beta-1,3-galactosyltransferase 1 (326 aa).

Over 1 to 6 (MASKVS) the chain is Cytoplasmic. Residues 7–26 (CLYVLTVVCWASALWYLSIT) form a helical; Signal-anchor for type II membrane protein membrane-spanning segment. Residues 27-326 (RPTSSYTGSK…DMSSKKHLRC (300 aa)) lie on the Lumenal side of the membrane. N-linked (GlcNAc...) asparagine glycans are attached at residues Asn-47 and Asn-151.

The protein belongs to the glycosyltransferase 31 family. Mn(2+) is required as a cofactor.

The protein localises to the golgi apparatus membrane. It catalyses the reaction an N-acetyl-beta-D-glucosaminyl derivative + UDP-alpha-D-galactose = a beta-D-galactosyl-(1-&gt;3)-N-acetyl-beta-D-glucosaminyl derivative + UDP + H(+). It carries out the reaction a beta-D-GlcNAc-(1-&gt;3)-beta-D-Gal-(1-&gt;4)-beta-D-Glc-(1&lt;-&gt;1)-Cer(d18:1(4E)) + UDP-alpha-D-galactose = a beta-D-Gal-(1-&gt;3)-beta-D-GlcNAc-(1-&gt;3)-beta-D-Gal-(1-&gt;4)-beta-D-Glc-(1&lt;-&gt;1')-Cer(d18:1(4E)) + UDP + H(+). The protein operates within protein modification; protein glycosylation. In terms of biological role, beta-1,3-galactosyltransferase that transfers galactose from UDP-galactose to substrates with a terminal beta-N-acetylglucosamine (beta-GlcNAc) residue. Involved in the biosynthesis of the carbohydrate moieties of glycolipids and glycoproteins. In Gorilla gorilla gorilla (Western lowland gorilla), this protein is Beta-1,3-galactosyltransferase 1 (B3GALT1).